A 901-amino-acid chain; its full sequence is Dipeptidyl-aminopeptidase B (901 aa).

The span at 1-22 shows a compositional bias: low complexity; sequence MSSPRPSTSSTSSDSGLSVDTT. The interval 1–67 is disordered; sequence MSSPRPSTSS…EPFLPSAKKQ (67 aa). At 1–76 the chain is on the cytoplasmic side; it reads MSSPRPSTSS…QAASGSRTSR (76 aa). Residues 77 to 97 form a helical; Signal-anchor for type II membrane protein membrane-spanning segment; the sequence is LIWGLVILCVAGWLWGLVLFV. Over 98–901 the chain is Vacuolar; it reads TQNRSAQQSV…VKRSLPMLVN (804 aa). N-linked (GlcNAc...) asparagine glycosylation is found at N334 and N625. The active-site Charge relay system is the S739. Residue N793 is glycosylated (N-linked (GlcNAc...) asparagine). Catalysis depends on charge relay system residues D816 and H849.

It belongs to the peptidase S9B family.

The protein resides in the vacuole membrane. The catalysed reaction is Release of an N-terminal dipeptide, Xaa-Yaa-|-Zaa-, from a polypeptide, preferentially when Yaa is Pro, provided Zaa is neither Pro nor hydroxyproline.. Functionally, type IV dipeptidyl-peptidase which removes N-terminal dipeptides sequentially from polypeptides having unsubstituted N-termini provided that the penultimate residue is proline. The protein is Dipeptidyl-aminopeptidase B (dapB) of Aspergillus niger.